The sequence spans 367 residues: Probable dual-specificity RNA methyltransferase RlmN (367 aa).

The Proton acceptor role is filled by E92. Positions 98–326 constitute a Radical SAM core domain; sequence QEYGLSVCVT…YDTLKKNGIN (229 aa). Cysteines 105 and 341 form a disulfide. 3 residues coordinate [4Fe-4S] cluster: C112, C116, and C119. S-adenosyl-L-methionine contacts are provided by residues 164-165, S196, 219-221, and N297; these read GE and SLH. The S-methylcysteine intermediate role is filled by C341.

It belongs to the radical SAM superfamily. RlmN family. [4Fe-4S] cluster serves as cofactor.

The protein resides in the cytoplasm. The enzyme catalyses adenosine(2503) in 23S rRNA + 2 reduced [2Fe-2S]-[ferredoxin] + 2 S-adenosyl-L-methionine = 2-methyladenosine(2503) in 23S rRNA + 5'-deoxyadenosine + L-methionine + 2 oxidized [2Fe-2S]-[ferredoxin] + S-adenosyl-L-homocysteine. It catalyses the reaction adenosine(37) in tRNA + 2 reduced [2Fe-2S]-[ferredoxin] + 2 S-adenosyl-L-methionine = 2-methyladenosine(37) in tRNA + 5'-deoxyadenosine + L-methionine + 2 oxidized [2Fe-2S]-[ferredoxin] + S-adenosyl-L-homocysteine. Specifically methylates position 2 of adenine 2503 in 23S rRNA and position 2 of adenine 37 in tRNAs. The chain is Probable dual-specificity RNA methyltransferase RlmN from Listeria monocytogenes serovar 1/2a (strain ATCC BAA-679 / EGD-e).